A 976-amino-acid chain; its full sequence is MNAGPGCEPCTKRPRWGAATTSPAASDARSFPSRQRRVLDPKDAHVQFRVPPSSPACVPGRAGQHRGSATSLVFKQKTITSWMDTKGIKTAESESLDSKENNNTRIESMMSSVQKDNFYQHNVEKLENVSQLSLDKSPTEKSTQYLNQHQTAAMCKWQNEGKHTEQLLESEPQTVTLVPEQFSNANIDRSPQNDDHSDTDSEENRDNQQFLTTVKLANAKQTTEDEQAREAKSHQKCSKSCDPGEDCASCQQDEIDVVPESPLSDVGSEDVGTGPKNDNKLTRQESCLGNSPPFEKESEPESPMDVDNSKNSCQDSEADEETSPGFDEQEDGSSSQTANKPSRFQARDADIEFRKRYSTKGGEVRLHFQFEGGESRTGMNDLNAKLPGNISSLNVECRNSKQHGKKDSKITDHFMRLPKAEDRRKEQWETKHQRTERKIPKYVPPHLSPDKKWLGTPIEEMRRMPRCGIRLPLLRPSANHTVTIRVDLLRAGEVPKPFPTHYKDLWDNKHVKMPCSEQNLYPVEDENGERTAGSRWELIQTALLNKFTRPQNLKDAILKYNVAYSKKWDFTALIDFWDKVLEEAEAQHLYQSILPDMVKIALCLPNICTQPIPLLKQKMNHSITMSQEQIASLLANAFFCTFPRRNAKMKSEYSSYPDINFNRLFEGRSSRKPEKLKTLFCYFRRVTEKKPTGLVTFTRQSLEDFPEWERCEKPLTRLHVTYEGTIEENGQGMLQVDFANRFVGGGVTSAGLVQEEIRFLINPELIISRLFTEVLDHNECLIITGTEQYSEYTGYAETYRWSRSHEDGSERDDWQRRCTEIVAIDALHFRRYLDQFVPEKMRRELNKAYCGFLRPGVSSENLSAVATGNWGCGAFGGDARLKALIQILAAAAAERDVVYFTFGDSELMRDIYSMHIFLTERKLTVGDVYKLLLRYYNEECRNCSTPGPDIKLYPFIYHAVESCAETADHSGQRTGT.

M1 carries the post-translational modification N-acetylmethionine. Residues 1–69 are disordered; that stretch reads MNAGPGCEPC…GRAGQHRGSA (69 aa). An A-domain region spans residues 1 to 456; it reads MNAGPGCEPC…LSPDKKWLGT (456 aa). A Nuclear localization signal motif is present at residues 10–16; that stretch reads CTKRPRW. Phosphoserine is present on S22. The span at 37-46 shows a compositional bias: basic and acidic residues; sequence RVLDPKDAHV. Phosphoserine is present on S68. The PIP-box (PCNA interacting peptide) signature appears at 76-83; that stretch reads QKTITSWM. 2 positions are modified to phosphoserine: S133 and S137. The residue at position 139 (T139) is a Phosphothreonine. Positions 183-350 are disordered; the sequence is SNANIDRSPQ…PSRFQARDAD (168 aa). Basic and acidic residues-rich tracts occupy residues 191 to 206 and 222 to 233; these read PQNDDHSDTDSEENRD and TTEDEQAREAKS. S197 carries the phosphoserine modification. T199 is modified (phosphothreonine). S261, S264, S286, S291, S298, S302, and S316 each carry phosphoserine. Over residues 316-331 the composition is skewed to acidic residues; it reads SEADEETSPGFDEQED. The span at 332–342 shows a compositional bias: polar residues; the sequence is GSSSQTANKPS. K340 bears the N6-acetyllysine mark. A Phosphoserine modification is found at S448. The interval 610 to 795 is catalytic; it reads QPIPLLKQKM…TEQYSEYTGY (186 aa). 726 to 727 contributes to the substrate binding site; that stretch reads IE. D737 is an active-site residue. Substrate is bound by residues N740 and Q754. Active-site residues include E755 and E756. Substrate is bound by residues Y795 and 869-874; that span reads NWGCGA.

Belongs to the poly(ADP-ribose) glycohydrolase family. In terms of assembly, interacts with PCNA. Interacts with NUDT5. As to expression, ubiquitously expressed.

It localises to the nucleus. Its subcellular location is the cytoplasm. It is found in the mitochondrion. The protein localises to the mitochondrion matrix. The enzyme catalyses [(1''-&gt;2')-ADP-alpha-D-ribose](n) + H2O = [(1''-&gt;2')-ADP-alpha-D-ribose](n-1) + ADP-D-ribose. Its function is as follows. Poly(ADP-ribose) glycohydrolase that degrades poly(ADP-ribose) by hydrolyzing the ribose-ribose bonds present in poly(ADP-ribose). PARG acts both as an endo- and exoglycosidase, releasing poly(ADP-ribose) of different length as well as ADP-ribose monomers. It is however unable to cleave the ester bond between the terminal ADP-ribose and ADP-ribosylated residues, leaving proteins that are mono-ADP-ribosylated. Poly(ADP-ribose) is synthesized after DNA damage is only present transiently and is rapidly degraded by PARG. Required to prevent detrimental accumulation of poly(ADP-ribose) upon prolonged replicative stress, while it is not required for recovery from transient replicative stress. Responsible for the prevalence of mono-ADP-ribosylated proteins in cells, thanks to its ability to degrade poly(ADP-ribose) without cleaving the terminal protein-ribose bond. Required for retinoid acid-dependent gene transactivation, probably by removing poly(ADP-ribose) from histone demethylase KDM4D, allowing chromatin derepression at RAR-dependent gene promoters. Involved in the synthesis of ATP in the nucleus, together with PARP1, NMNAT1 and NUDT5. Nuclear ATP generation is required for extensive chromatin remodeling events that are energy-consuming. This chain is Poly(ADP-ribose) glycohydrolase, found in Homo sapiens (Human).